The primary structure comprises 388 residues: Succinate--CoA ligase [ADP-forming] subunit beta (388 aa).

ATP contacts are provided by residues Lys-46, 53-55, Glu-99, Cys-102, and Glu-107; that span reads GRG. The Mg(2+) site is built by Asn-199 and Asp-213. Substrate is bound by residues Asn-264 and 321–323; that span reads GIV.

This sequence belongs to the succinate/malate CoA ligase beta subunit family. As to quaternary structure, heterotetramer of two alpha and two beta subunits. The cofactor is Mg(2+).

It catalyses the reaction succinate + ATP + CoA = succinyl-CoA + ADP + phosphate. It carries out the reaction GTP + succinate + CoA = succinyl-CoA + GDP + phosphate. It functions in the pathway carbohydrate metabolism; tricarboxylic acid cycle; succinate from succinyl-CoA (ligase route): step 1/1. Its function is as follows. Succinyl-CoA synthetase functions in the citric acid cycle (TCA), coupling the hydrolysis of succinyl-CoA to the synthesis of either ATP or GTP and thus represents the only step of substrate-level phosphorylation in the TCA. The beta subunit provides nucleotide specificity of the enzyme and binds the substrate succinate, while the binding sites for coenzyme A and phosphate are found in the alpha subunit. The sequence is that of Succinate--CoA ligase [ADP-forming] subunit beta from Actinobacillus pleuropneumoniae serotype 7 (strain AP76).